A 463-amino-acid chain; its full sequence is Cysteine--tRNA ligase (463 aa).

Cysteine 30 provides a ligand contact to Zn(2+). Residues methionine 32–histidine 42 carry the 'HIGH' region motif. Cysteine 214, histidine 239, and glutamate 243 together coordinate Zn(2+). The 'KMSKS' region motif lies at lysine 271–serine 275. Lysine 274 lines the ATP pocket.

The protein belongs to the class-I aminoacyl-tRNA synthetase family. Monomer. Zn(2+) serves as cofactor.

The protein localises to the cytoplasm. It catalyses the reaction tRNA(Cys) + L-cysteine + ATP = L-cysteinyl-tRNA(Cys) + AMP + diphosphate. This chain is Cysteine--tRNA ligase, found in Ralstonia pickettii (strain 12J).